A 287-amino-acid polypeptide reads, in one-letter code: Merozoite surface protein 2 (287 aa).

The first 20 residues, 1–20, serve as a signal peptide directing secretion; sequence MKVIKTLSIINFFIFVTFNI. N-linked (GlcNAc...) asparagine glycans are attached at residues N22 and N36. Residues 42–248 form a disordered region; the sequence is SMTESNPPTG…DSQKECTDGN (207 aa). A polymorphic region region spans residues 44 to 213; it reads TESNPPTGAS…EQTESPELQS (170 aa). Residues 54–112 are compositionally biased toward gly residues; that stretch reads GSAGGSAGGSAGGSAGGSAGGSAGGSAGGSAGGSAGGSAGGSAGGSAGGSAGSGDGNGA. 12 consecutive repeat copies span residues 55 to 58, 59 to 62, 63 to 66, 67 to 70, 71 to 74, 75 to 78, 79 to 82, 83 to 86, 87 to 90, 91 to 94, 95 to 98, and 99 to 102. The interval 55-102 is 12 X 4 AA tandem repeats of S-A-G-G; sequence SAGGSAGGSAGGSAGGSAGGSAGGSAGGSAGGSAGGSAGGSAGGSAGG. A compositionally biased stretch (low complexity) spans 121-149; that stretch reads SPSTPATTTTTTTTNDAEASTSTSSENPN. 2 stretches are compositionally biased toward polar residues: residues 150 to 180 and 187 to 215; these read HNNA…NVPP and KSPT…QSAP. N-linked (GlcNAc...) asparagine glycosylation occurs at N164. N236 carries N-linked (GlcNAc...) asparagine glycosylation. An intrachain disulfide couples C244 to C252. N-linked (GlcNAc...) asparagine glycans are attached at residues N260 and N261. N261 carries GPI-anchor amidated asparagine lipidation. A propeptide spans 262 to 287 (removed in mature form); the sequence is SSNIASINKFVVLISATLVLSFAIFI.

Its subcellular location is the cell membrane. May play a role in the merozoite attachment to the erythrocyte. The sequence is that of Merozoite surface protein 2 from Plasmodium falciparum (isolate FCR-3 / Gambia).